Consider the following 95-residue polypeptide: UPF0298 protein LVIS_1401 (95 aa).

This sequence belongs to the UPF0298 family.

The protein resides in the cytoplasm. This chain is UPF0298 protein LVIS_1401, found in Levilactobacillus brevis (strain ATCC 367 / BCRC 12310 / CIP 105137 / JCM 1170 / LMG 11437 / NCIMB 947 / NCTC 947) (Lactobacillus brevis).